We begin with the raw amino-acid sequence, 130 residues long: Small ribosomal subunit protein uS8 (130 aa).

This sequence belongs to the universal ribosomal protein uS8 family. As to quaternary structure, part of the 30S ribosomal subunit. Contacts proteins S5 and S12.

Functionally, one of the primary rRNA binding proteins, it binds directly to 16S rRNA central domain where it helps coordinate assembly of the platform of the 30S subunit. This is Small ribosomal subunit protein uS8 from Phytoplasma australiense.